A 103-amino-acid chain; its full sequence is Large ribosomal subunit protein bL21 (103 aa).

It belongs to the bacterial ribosomal protein bL21 family. In terms of assembly, part of the 50S ribosomal subunit. Contacts protein L20.

In terms of biological role, this protein binds to 23S rRNA in the presence of protein L20. The polypeptide is Large ribosomal subunit protein bL21 (Lactobacillus delbrueckii subsp. bulgaricus (strain ATCC 11842 / DSM 20081 / BCRC 10696 / JCM 1002 / NBRC 13953 / NCIMB 11778 / NCTC 12712 / WDCM 00102 / Lb 14)).